The primary structure comprises 495 residues: Acetyl-coenzyme A carboxylase carboxyl transferase subunit beta, chloroplastic (495 aa).

The segment at 188–208 is disordered; the sequence is SRNSSENEGSSRRTRTKGSDL. The region spanning 226-495 is the CoA carboxyltransferase N-terminal domain; that stretch reads LWVQCENCYG…PLNQKSSKIK (270 aa). 4 residues coordinate Zn(2+): Cys-230, Cys-233, Cys-249, and Cys-252. The C4-type zinc finger occupies 230–252; that stretch reads CENCYGLNYKKFFKSKMNICEQC.

The protein belongs to the AccD/PCCB family. As to quaternary structure, acetyl-CoA carboxylase is a heterohexamer composed of biotin carboxyl carrier protein, biotin carboxylase and 2 subunits each of ACCase subunit alpha and ACCase plastid-coded subunit beta (accD). Requires Zn(2+) as cofactor.

Its subcellular location is the plastid. The protein resides in the chloroplast stroma. The enzyme catalyses N(6)-carboxybiotinyl-L-lysyl-[protein] + acetyl-CoA = N(6)-biotinyl-L-lysyl-[protein] + malonyl-CoA. It participates in lipid metabolism; malonyl-CoA biosynthesis; malonyl-CoA from acetyl-CoA: step 1/1. Its function is as follows. Component of the acetyl coenzyme A carboxylase (ACC) complex. Biotin carboxylase (BC) catalyzes the carboxylation of biotin on its carrier protein (BCCP) and then the CO(2) group is transferred by the transcarboxylase to acetyl-CoA to form malonyl-CoA. This chain is Acetyl-coenzyme A carboxylase carboxyl transferase subunit beta, chloroplastic, found in Nicotiana tomentosiformis (Tobacco).